Here is a 169-residue protein sequence, read N- to C-terminus: uncharacterized protein (169 aa).

Its subcellular location is the mitochondrion. This is an uncharacterized protein from Paramecium tetraurelia.